A 469-amino-acid polypeptide reads, in one-letter code: 3-isopropylmalate dehydratase large subunit (469 aa).

3 residues coordinate [4Fe-4S] cluster: Cys-349, Cys-410, and Cys-413.

The protein belongs to the aconitase/IPM isomerase family. LeuC type 1 subfamily. As to quaternary structure, heterodimer of LeuC and LeuD. The cofactor is [4Fe-4S] cluster.

The enzyme catalyses (2R,3S)-3-isopropylmalate = (2S)-2-isopropylmalate. It participates in amino-acid biosynthesis; L-leucine biosynthesis; L-leucine from 3-methyl-2-oxobutanoate: step 2/4. Functionally, catalyzes the isomerization between 2-isopropylmalate and 3-isopropylmalate, via the formation of 2-isopropylmaleate. This chain is 3-isopropylmalate dehydratase large subunit, found in Neisseria meningitidis serogroup C / serotype 2a (strain ATCC 700532 / DSM 15464 / FAM18).